We begin with the raw amino-acid sequence, 159 residues long: Transcription antitermination protein NusB (159 aa).

It belongs to the NusB family.

Involved in transcription antitermination. Required for transcription of ribosomal RNA (rRNA) genes. Binds specifically to the boxA antiterminator sequence of the ribosomal RNA (rrn) operons. This is Transcription antitermination protein NusB from Stenotrophomonas maltophilia (strain K279a).